Reading from the N-terminus, the 64-residue chain is Large ribosomal subunit protein bL32 (64 aa).

The interval 1–35 (MAVQKSRVTPSRRGQRRSHDALTAKQLSTDPTSGE) is disordered.

The protein belongs to the bacterial ribosomal protein bL32 family.

This Xanthomonas campestris pv. campestris (strain 8004) protein is Large ribosomal subunit protein bL32.